Consider the following 331-residue polypeptide: Glyceraldehyde-3-phosphate dehydrogenase (331 aa).

NAD(+) is bound by residues 10–11, D31, K75, and T117; that span reads RI. Residues 148 to 150 and T179 contribute to the D-glyceraldehyde 3-phosphate site; that span reads SCT. The active-site Nucleophile is the C149. N180 provides a ligand contact to NAD(+). D-glyceraldehyde 3-phosphate is bound by residues R194, 207-208, and R230; that span reads TG. N311 contacts NAD(+).

It belongs to the glyceraldehyde-3-phosphate dehydrogenase family. In terms of assembly, homotetramer.

It is found in the cytoplasm. It catalyses the reaction D-glyceraldehyde 3-phosphate + phosphate + NAD(+) = (2R)-3-phospho-glyceroyl phosphate + NADH + H(+). It functions in the pathway carbohydrate degradation; glycolysis; pyruvate from D-glyceraldehyde 3-phosphate: step 1/5. Its function is as follows. Catalyzes the oxidative phosphorylation of glyceraldehyde 3-phosphate (G3P) to 1,3-bisphosphoglycerate (BPG) using the cofactor NAD. The first reaction step involves the formation of a hemiacetal intermediate between G3P and a cysteine residue, and this hemiacetal intermediate is then oxidized to a thioester, with concomitant reduction of NAD to NADH. The reduced NADH is then exchanged with the second NAD, and the thioester is attacked by a nucleophilic inorganic phosphate to produce BPG. The chain is Glyceraldehyde-3-phosphate dehydrogenase (gap) from Thermus aquaticus.